The following is a 227-amino-acid chain: Thiamine-phosphate synthase (227 aa).

Residues 50-54 and Asp-82 each bind 4-amino-2-methyl-5-(diphosphooxymethyl)pyrimidine; that span reads QFRQK. Asp-83 and Asp-102 together coordinate Mg(2+). Thr-121 is a binding site for 4-amino-2-methyl-5-(diphosphooxymethyl)pyrimidine. A 2-[(2R,5Z)-2-carboxy-4-methylthiazol-5(2H)-ylidene]ethyl phosphate-binding site is contributed by 147 to 149; sequence TTS. Lys-150 contributes to the 4-amino-2-methyl-5-(diphosphooxymethyl)pyrimidine binding site. 2-[(2R,5Z)-2-carboxy-4-methylthiazol-5(2H)-ylidene]ethyl phosphate is bound by residues Gly-178 and 198-199; that span reads LS.

The protein belongs to the thiamine-phosphate synthase family. Requires Mg(2+) as cofactor.

The enzyme catalyses 2-[(2R,5Z)-2-carboxy-4-methylthiazol-5(2H)-ylidene]ethyl phosphate + 4-amino-2-methyl-5-(diphosphooxymethyl)pyrimidine + 2 H(+) = thiamine phosphate + CO2 + diphosphate. It catalyses the reaction 2-(2-carboxy-4-methylthiazol-5-yl)ethyl phosphate + 4-amino-2-methyl-5-(diphosphooxymethyl)pyrimidine + 2 H(+) = thiamine phosphate + CO2 + diphosphate. It carries out the reaction 4-methyl-5-(2-phosphooxyethyl)-thiazole + 4-amino-2-methyl-5-(diphosphooxymethyl)pyrimidine + H(+) = thiamine phosphate + diphosphate. It functions in the pathway cofactor biosynthesis; thiamine diphosphate biosynthesis; thiamine phosphate from 4-amino-2-methyl-5-diphosphomethylpyrimidine and 4-methyl-5-(2-phosphoethyl)-thiazole: step 1/1. Condenses 4-methyl-5-(beta-hydroxyethyl)thiazole monophosphate (THZ-P) and 2-methyl-4-amino-5-hydroxymethyl pyrimidine pyrophosphate (HMP-PP) to form thiamine monophosphate (TMP). In Salinibacter ruber (strain DSM 13855 / M31), this protein is Thiamine-phosphate synthase.